Consider the following 845-residue polypeptide: Nuclear pore complex protein Nup107 (845 aa).

Disordered regions lie at residues 1 to 26 (MADS…MPPQ) and 677 to 702 (QNRP…MASE). Composition is skewed to polar residues over residues 7–26 (PRSS…MPPQ) and 685–694 (TSHAASSQDN).

This sequence belongs to the nucleoporin Nup84/Nup107 family. In terms of assembly, part of the nuclear pore complex (NPC). In terms of tissue distribution, expressed in spermatocytes (at protein level).

The protein resides in the nucleus. It localises to the nuclear pore complex. Its subcellular location is the nucleus envelope. It is found in the nucleus membrane. The protein localises to the cytoplasm. The protein resides in the cytoskeleton. It localises to the spindle. Its subcellular location is the chromosome. It is found in the nucleus matrix. Functionally, plays a role in nuclear pore complex (NPC) assembly and maintenance. Required for nuclear import of Mad. Mediates the association between the nuclear pore complex and a subset of active chromatin regions adjacent to lamin-associated domains. Plays a role in double strand break repair by relocalizing the heterochromatic double strand breaks (DSBs) to the nuclear periphery as part of the homologous recombination (HR) repair process. Regulates cytokinesis during spermatocyte meiosis by maintaining type-B lamin Lam localization to the spindle envelope. Regulates female gonad development and oogenesis. The sequence is that of Nuclear pore complex protein Nup107 from Drosophila melanogaster (Fruit fly).